We begin with the raw amino-acid sequence, 124 residues long: Ragulator complex protein LAMTOR2 homolog (124 aa).

Belongs to the GAMAD family. As to quaternary structure, part of the Ragulator complex.

Functionally, regulator of the TOR pathway, a signaling cascade that promotes cell growth in response to growth factors, energy levels, and amino acids. May activate the TOR signaling cascade in response to amino acids. The sequence is that of Ragulator complex protein LAMTOR2 homolog from Caenorhabditis elegans.